The sequence spans 399 residues: MSESIFAERIVQNLLDTDFYKLTMMQAVLHNYPNAEVEWEFRCRSSEDLTPYLAEIRYQIERLSELSITADQLAFLERIPFIKPDFIRFLSLFRFNLRYVHTGIEDGQLSIRLRGPWLHVILFEVPLLAIVSEVRNRYRYREVLLEQAAERLYQKLDWLRAEASEDELAGFQLADFGTRRRFSYRVQEQAVHILKRDFPGRFVGTSNVHLAREFDLKPIGTMAHEWLMAHQQLGPRLIDSQIAALDCWVREYRGQLGIALTDCITMDAFLADFDLYFAKLFDGLRHDSGDPLEWAEKAIAHYEKLGIDPLSKTLVFSDGLDLPKSLRLYRALSGRIHVSFGVGTNLTCDIPGVEPMNIVIKMIACNGQPVAKISDTPGKTQCRDENFVSYLKHVFRVTQ.

Residue His-224 is modified to Phosphohistidine; by autocatalysis.

Belongs to the NAPRTase family. Post-translationally, transiently phosphorylated on a His residue during the reaction cycle. Phosphorylation strongly increases the affinity for substrates and increases the rate of nicotinate D-ribonucleotide production. Dephosphorylation regenerates the low-affinity form of the enzyme, leading to product release.

It carries out the reaction nicotinate + 5-phospho-alpha-D-ribose 1-diphosphate + ATP + H2O = nicotinate beta-D-ribonucleotide + ADP + phosphate + diphosphate. It functions in the pathway cofactor biosynthesis; NAD(+) biosynthesis; nicotinate D-ribonucleotide from nicotinate: step 1/1. Catalyzes the synthesis of beta-nicotinate D-ribonucleotide from nicotinate and 5-phospho-D-ribose 1-phosphate at the expense of ATP. The polypeptide is Nicotinate phosphoribosyltransferase (Ectopseudomonas mendocina (strain ymp) (Pseudomonas mendocina)).